Reading from the N-terminus, the 532-residue chain is CTP synthase (532 aa).

Residues Met-1–Ile-267 form an amidoligase domain region. Ser-13 is a binding site for CTP. A UTP-binding site is contributed by Ser-13. Gly-14–Ile-19 lines the ATP pocket. Residue Tyr-54 participates in L-glutamine binding. Asp-71 is an ATP binding site. The Mg(2+) site is built by Asp-71 and Glu-141. CTP is bound by residues Asp-148–Glu-150, Lys-188–Gln-193, and Lys-224. Residues Lys-188 to Gln-193 and Lys-224 each bind UTP. In terms of domain architecture, Glutamine amidotransferase type-1 spans Glu-292–Lys-532. Gly-354 contributes to the L-glutamine binding site. The active-site Nucleophile; for glutamine hydrolysis is Cys-381. L-glutamine-binding positions include Leu-382–Gln-385, Glu-405, and Arg-462. Residues His-507 and Glu-509 contribute to the active site.

This sequence belongs to the CTP synthase family. Homotetramer.

The enzyme catalyses UTP + L-glutamine + ATP + H2O = CTP + L-glutamate + ADP + phosphate + 2 H(+). The catalysed reaction is L-glutamine + H2O = L-glutamate + NH4(+). It carries out the reaction UTP + NH4(+) + ATP = CTP + ADP + phosphate + 2 H(+). It functions in the pathway pyrimidine metabolism; CTP biosynthesis via de novo pathway; CTP from UDP: step 2/2. Its activity is regulated as follows. Allosterically activated by GTP, when glutamine is the substrate; GTP has no effect on the reaction when ammonia is the substrate. The allosteric effector GTP functions by stabilizing the protein conformation that binds the tetrahedral intermediate(s) formed during glutamine hydrolysis. Inhibited by the product CTP, via allosteric rather than competitive inhibition. Catalyzes the ATP-dependent amination of UTP to CTP with either L-glutamine or ammonia as the source of nitrogen. Regulates intracellular CTP levels through interactions with the four ribonucleotide triphosphates. The protein is CTP synthase of Mesoplasma florum (strain ATCC 33453 / NBRC 100688 / NCTC 11704 / L1) (Acholeplasma florum).